The primary structure comprises 339 residues: Silicatein (339 aa).

The first 18 residues, 1 to 18, serve as a signal peptide directing secretion; sequence MAIVYGAILFQIILIACA. Residues 19–122 constitute a propeptide that is removed on maturation; that stretch reads EFPPEWHAWK…REYQAPATVS (104 aa). Leu-123 carries the n,N-dimethylleucine; alternate modification. An N-methylleucine; alternate modification is found at Leu-123. At Ser-188 the chain carries Phosphoserine. Phosphotyrosine is present on Tyr-219. Catalysis depends on residues His-286 and Asn-306. A Phosphoserine modification is found at Ser-335.

Belongs to the peptidase C1 family. Homodimer. Homodimerization occurs as a result of non-covalent interactions and not through disulfide linkages between the two monomers.

Functionally, polymerizes silica around the axial filament during spicule formation. The sequence is that of Silicatein from Petrosia ficiformis (Common Mediterranean sponge).